A 1108-amino-acid chain; its full sequence is Retinal guanylyl cyclase 2 (1108 aa).

The first 50 residues, 1–50 (MFLGPWPFSRLLSWFAISSRLSGQHGLTSSKFLRYLCLLALLPLIWWGQA), serve as a signal peptide directing secretion. Residues 51-465 (LPYKIGVIGP…QGKICQGGID (415 aa)) are Extracellular-facing. Cysteine 104 and cysteine 132 are oxidised to a cystine. A helical transmembrane segment spans residues 466 to 490 (PALAMMVCFALLLALLSINGFAYFI). At 491 to 1108 (RRRINKIQLI…AERQLVRNKP (618 aa)) the chain is on the cytoplasmic side. In terms of domain architecture, Protein kinase spans 532–812 (FQIISEVQSG…DEIFNQFKTF (281 aa)). A Guanylate cyclase domain is found at 884 to 1014 (TLYFSDIVGF…DTVNTASRME (131 aa)).

This sequence belongs to the adenylyl cyclase class-4/guanylyl cyclase family. As to quaternary structure, homodimer. Interacts with RD3; promotes the exit of GUCY2F from the endoplasmic reticulum and its trafficking to the photoreceptor outer segments. There are 9 conserved cysteine residues in sensory guanylate cyclases, 6 in the extracellular domain, which may be involved in intra- or interchain disulfide bonds. As to expression, expressed only in the eye.

The protein resides in the membrane. It is found in the photoreceptor outer segment membrane. The enzyme catalyses GTP = 3',5'-cyclic GMP + diphosphate. Its activity is regulated as follows. Activated by GUCA1B when free calcium ions concentration is low, and inhibited by GUCA1B when free calcium ions concentration is high. Inhibited by RD3. Responsible for the synthesis of cyclic GMP (cGMP) in rods and cones of photoreceptors. Plays an essential role in phototransduction, by mediating cGMP replenishment. May also participate in the trafficking of membrane-asociated proteins to the photoreceptor outer segment membrane. In Rattus norvegicus (Rat), this protein is Retinal guanylyl cyclase 2 (Gucy2f).